We begin with the raw amino-acid sequence, 320 residues long: Tetraacyldisaccharide 4'-kinase (320 aa).

Ser-53–Thr-60 is a binding site for ATP.

Belongs to the LpxK family.

It carries out the reaction a lipid A disaccharide + ATP = a lipid IVA + ADP + H(+). Its pathway is glycolipid biosynthesis; lipid IV(A) biosynthesis; lipid IV(A) from (3R)-3-hydroxytetradecanoyl-[acyl-carrier-protein] and UDP-N-acetyl-alpha-D-glucosamine: step 6/6. Its function is as follows. Transfers the gamma-phosphate of ATP to the 4'-position of a tetraacyldisaccharide 1-phosphate intermediate (termed DS-1-P) to form tetraacyldisaccharide 1,4'-bis-phosphate (lipid IVA). In Psychromonas ingrahamii (strain DSM 17664 / CCUG 51855 / 37), this protein is Tetraacyldisaccharide 4'-kinase.